Here is a 647-residue protein sequence, read N- to C-terminus: RalA-binding protein 1 (647 aa).

Disordered stretches follow at residues 1–151 and 163–186; these read MTEC…EKKC and WKEK…APSL. The residue at position 2 (T2) is an N-acetylthreonine. Over residues 24–33 the composition is skewed to polar residues; it reads LTRTPSSEEI. Phosphoserine occurs at positions 29, 30, and 34. T44 bears the Phosphothreonine mark. Phosphoserine occurs at positions 48 and 62. Residues 52 to 68 are compositionally biased toward basic and acidic residues; it reads DILHEPPDIVSDDEKDH. 69 to 74 contributes to the ATP binding site; sequence GKKKGK. Residues 69 to 79 are compositionally biased toward basic residues; the sequence is GKKKGKFKKKE. 2 positions are modified to phosphoserine: S92 and S93. Positions 102–118 are enriched in basic residues; the sequence is KMKRSKGIHVFKKPSFS. The tract at residues 102–119 is nuclear localization signal; it reads KMKRSKGIHVFKKPSFSK. Residues 119–151 show a composition bias toward basic and acidic residues; sequence KKKEKDFKIKEKPKEEKHKEEKHKEEKHKEKKC. Residues 154–219 form a mediates association with membranes and could form transmembrane domains region; that stretch reads FTAADVVKQW…PAVFRECVDY (66 aa). The Rho-GAP domain occupies 192 to 380; sequence APFADAVERT…VLLKQVTRPL (189 aa). The segment at 403 to 499 is mediates interaction with RALA and RALB; that stretch reads RRQEFLLNCL…LTEQEELLAM (97 aa). 418–425 is a binding site for ATP; the sequence is GGIKDFSK. Phosphoserine occurs at positions 461 and 463. A mediates interaction with REPS1 and REPS2 region spans residues 500–647; sequence EQFLRRQIAS…PSKDRKETPI (148 aa). Disordered regions lie at residues 525-550 and 601-647; these read QSRQ…DEEE and EQQL…ETPI. The segment covering 535–550 has biased composition (acidic residues); it reads EEYSSDSESESEDEEE. Basic and acidic residues predominate over residues 628–647; sequence RAAKEQAKPSPSKDRKETPI. Residue S637 is modified to Phosphoserine.

Interacts with the GTP-bound form of RALA (via effector domain); during mitosis, recruits RALBP1 to the mitochondrion where it promotes DNM1L phosphorylation and mitochondrial fission. Interacts with DNM1L; mediates its mitotic kinase cyclin B-CDK1-mediated phosphorylation during mitosis to promote mitochondrial fission. Interacts with the mitotic kinase cyclin B-CDK1 during mitosis. Interacts with the GTP-bound form of RALB (via effector domain). Interacts with REPS1; the interaction is direct and does not affect RALA-binding nor GTPase activator activity of RALBP1. Interacts with REPS2; the interaction is direct and does not affect RALA-binding nor GTPase activator activity of RALBP1. Interacts with EPN1, NUMB and TFAP2A during interphase and mitosis. Interacts with AP2M1; as part of the AP2 complex. Interacts with CDC42. Interacts with RAC1. In terms of processing, tyrosine-phosphorylated upon stimulation of cells with EGF. Post-translationally, may undergo proteolytic cleavage to give peptides which reassemble to form a transporter complex. Ubiquitously expressed.

It localises to the cell membrane. It is found in the cytoplasm. Its subcellular location is the cytosol. The protein localises to the cytoskeleton. The protein resides in the spindle pole. It localises to the nucleus. It is found in the mitochondrion. The catalysed reaction is an S-substituted glutathione(in) + ATP + H2O = an S-substituted glutathione(out) + ADP + phosphate + H(+). The enzyme catalyses ATP + H2O + xenobioticSide 1 = ADP + phosphate + xenobioticSide 2.. It catalyses the reaction leukotriene C4(in) + ATP + H2O = leukotriene C4(out) + ADP + phosphate + H(+). Its function is as follows. Multifunctional protein that functions as a downstream effector of RALA and RALB. As a GTPase-activating protein/GAP can inactivate CDC42 and RAC1 by stimulating their GTPase activity. As part of the Ral signaling pathway, may also regulate ligand-dependent EGF and insulin receptors-mediated endocytosis. During mitosis, may act as a scaffold protein in the phosphorylation of EPSIN/EPN1 by the mitotic kinase cyclin B-CDK1, preventing endocytosis during that phase of the cell cycle. During mitosis, also controls mitochondrial fission as an effector of RALA. Recruited to mitochondrion by RALA, acts as a scaffold to foster the mitotic kinase cyclin B-CDK1-mediated phosphorylation and activation of DNM1L. Functionally, could also function as a primary ATP-dependent active transporter for glutathione conjugates of electrophiles. May also actively catalyze the efflux of a wide range of substrates including xenobiotics like doxorubicin (DOX) contributing to cell multidrug resistance. The chain is RalA-binding protein 1 from Rattus norvegicus (Rat).